The chain runs to 458 residues: Exodeoxyribonuclease 7 large subunit (458 aa).

This sequence belongs to the XseA family. Heterooligomer composed of large and small subunits.

The protein localises to the cytoplasm. The catalysed reaction is Exonucleolytic cleavage in either 5'- to 3'- or 3'- to 5'-direction to yield nucleoside 5'-phosphates.. Bidirectionally degrades single-stranded DNA into large acid-insoluble oligonucleotides, which are then degraded further into small acid-soluble oligonucleotides. The protein is Exodeoxyribonuclease 7 large subunit of Halalkalibacterium halodurans (strain ATCC BAA-125 / DSM 18197 / FERM 7344 / JCM 9153 / C-125) (Bacillus halodurans).